Reading from the N-terminus, the 2258-residue chain is Probable serine/threonine-protein kinase ifkA (2258 aa).

Disordered stretches follow at residues 43–108 (RVNS…HQMG) and 189–308 (EMNN…KEND). Residues 45–57 (NSSDDINNNNNNN) are compositionally biased toward low complexity. A compositionally biased stretch (acidic residues) spans 58–100 (NDDDDDNDDYDDSDDENSDSDYDDYDDSDDENSDDEFYSDDED). A compositionally biased stretch (low complexity) spans 191–301 (NNLTNSNNSN…NKELIDNNNN (111 aa)). Positions 273–309 (NNNNNISNNKINKINNNNNNKELIDNNNNNKDKENDL) form a coiled coil. Residues 319 to 691 (WKKGSCIERK…AGILLKHPFL (373 aa)) enclose the Protein kinase 1 domain. ATP-binding positions include 325-333 (IERKSNYSV) and K348. A disordered region spans residues 358 to 398 (SSSSLTSLSNSNNNNSNNNNNNNNNNNNNNNNNNNNNNNNN). Residues 359–398 (SSSLTSLSNSNNNNSNNNNNNNNNNNNNNNNNNNNNNNNN) show a composition bias toward low complexity. D498 (proton acceptor) is an active-site residue. Disordered stretches follow at residues 741 to 768 (KSQT…NGSN) and 782 to 870 (PLAT…MTPL). Residues 746–768 (NNNNDNNNLASSNELLSSSNGSN) show a composition bias toward low complexity. A compositionally biased stretch (polar residues) spans 782 to 791 (PLATSSSLDN). Pro residues predominate over residues 793-805 (TPPPSRPISPKPS). Residues 841–870 (PQQNFNTPPTTTTTTTTPTATPTTPTMTPL) are compositionally biased toward low complexity. The Protein kinase 2 domain maps to 894–1482 (FEEIEMIGKG…TKQLLESGLL (589 aa)). ATP contacts are provided by residues 900–908 (IGKGGFGVV) and K923. Residues 1053–1094 (TLSSSNTSSSSSLLSNNKSKILNTSKSTSTNTSTSTSTSNTN) are compositionally biased toward low complexity. The interval 1053 to 1259 (TLSSSNTSSS…SSSRKKPPKE (207 aa)) is disordered. Residues 1095 to 1106 (KNKKISKKKKSK) are compositionally biased toward basic residues. Low complexity predominate over residues 1156-1185 (NNNNNNDNNNNYHSDNESDSFSGSISMSDG). Positions 1206–1233 (DENENDDDDEEDDDDEYDEEDDDYETFD) are enriched in acidic residues. Residues 1242-1251 (SNNSKLSTSS) show a composition bias toward low complexity. D1313 functions as the Proton acceptor in the catalytic mechanism. Disordered stretches follow at residues 1343 to 1370 (KSDD…TAQQ) and 2048 to 2104 (GSGG…QQTS). The span at 1347–1368 (LNSSTSNTANNINLSSSTNSTA) shows a compositional bias: low complexity. A compositionally biased stretch (gly residues) spans 2048 to 2072 (GSGGSGGSGGGSSMSSGGGGGGNSN). Over residues 2085–2099 (SNQSTSSSGNSNNSN) the composition is skewed to low complexity.

This sequence belongs to the protein kinase superfamily. Ser/Thr protein kinase family.

The enzyme catalyses L-seryl-[protein] + ATP = O-phospho-L-seryl-[protein] + ADP + H(+). The catalysed reaction is L-threonyl-[protein] + ATP = O-phospho-L-threonyl-[protein] + ADP + H(+). Phosphorylates eIF2-alpha, from 1 to 7 hours after the onset of development or during the preaggregation state, resulting in a shift from polysomes to free ribosomes for bulk mRNA. This is Probable serine/threonine-protein kinase ifkA (ifkA) from Dictyostelium discoideum (Social amoeba).